A 274-amino-acid polypeptide reads, in one-letter code: MRQVAIYGKGGIGKSTTTQNTVAALAESGKKVMVVGCDPKADSTRLLLHGLNQKTVLDTLRDEGDDIELESILKTGFGETRCVESGGPEPGVGCAGRGIITSINMLEQLGAYTDDLDYVFYDVLGDVVCGGFAMPIREGKAREIYIVASGELMALYAANNIAKGIKKYAETGGVRLGGIICNSRKADNEYALVKAVAEEIGTQMIHFVPRDNIVQRAEINKMTVIDFDPAANQANEYRKLAKAIDENQMFVVPKPMTQDRLEELMMKHGFLDAV.

Position 8–15 (8–15 (GKGGIGKS)) interacts with ATP. [4Fe-4S] cluster is bound at residue cysteine 94. ADP-ribosylarginine; by dinitrogenase reductase ADP-ribosyltransferase is present on arginine 97. [4Fe-4S] cluster is bound at residue cysteine 129.

Belongs to the NifH/BchL/ChlL family. In terms of assembly, homodimer. Requires [4Fe-4S] cluster as cofactor. The reversible ADP-ribosylation of Arg-97 inactivates the nitrogenase reductase and regulates nitrogenase activity.

The enzyme catalyses N2 + 8 reduced [2Fe-2S]-[ferredoxin] + 16 ATP + 16 H2O = H2 + 8 oxidized [2Fe-2S]-[ferredoxin] + 2 NH4(+) + 16 ADP + 16 phosphate + 6 H(+). The key enzymatic reactions in nitrogen fixation are catalyzed by the nitrogenase complex, which has 2 components: the iron protein and the molybdenum-iron protein. The sequence is that of Nitrogenase iron protein from Methanocella arvoryzae (strain DSM 22066 / NBRC 105507 / MRE50).